Reading from the N-terminus, the 124-residue chain is Small ribosomal subunit protein uS12 (124 aa).

The residue at position 89 (aspartate 89) is a 3-methylthioaspartic acid.

It belongs to the universal ribosomal protein uS12 family. In terms of assembly, part of the 30S ribosomal subunit. Contacts proteins S8 and S17. May interact with IF1 in the 30S initiation complex.

With S4 and S5 plays an important role in translational accuracy. Its function is as follows. Interacts with and stabilizes bases of the 16S rRNA that are involved in tRNA selection in the A site and with the mRNA backbone. Located at the interface of the 30S and 50S subunits, it traverses the body of the 30S subunit contacting proteins on the other side and probably holding the rRNA structure together. The combined cluster of proteins S8, S12 and S17 appears to hold together the shoulder and platform of the 30S subunit. In Histophilus somni (strain 129Pt) (Haemophilus somnus), this protein is Small ribosomal subunit protein uS12.